The following is a 234-amino-acid chain: Proteasome subunit alpha (234 aa).

Belongs to the peptidase T1A family. As to quaternary structure, the 20S proteasome core is composed of 14 alpha and 14 beta subunits that assemble into four stacked heptameric rings, resulting in a barrel-shaped structure. The two inner rings, each composed of seven catalytic beta subunits, are sandwiched by two outer rings, each composed of seven alpha subunits. The catalytic chamber with the active sites is on the inside of the barrel. Has a gated structure, the ends of the cylinder being occluded by the N-termini of the alpha-subunits. Is capped at one or both ends by the proteasome regulatory ATPase, PAN.

The protein localises to the cytoplasm. With respect to regulation, the formation of the proteasomal ATPase PAN-20S proteasome complex, via the docking of the C-termini of PAN into the intersubunit pockets in the alpha-rings, triggers opening of the gate for substrate entry. Interconversion between the open-gate and close-gate conformations leads to a dynamic regulation of the 20S proteasome proteolysis activity. Component of the proteasome core, a large protease complex with broad specificity involved in protein degradation. This chain is Proteasome subunit alpha, found in Picrophilus torridus (strain ATCC 700027 / DSM 9790 / JCM 10055 / NBRC 100828 / KAW 2/3).